A 430-amino-acid polypeptide reads, in one-letter code: tRNA(Ile)-lysidine synthase (430 aa).

24 to 29 (SGGLDS) serves as a coordination point for ATP.

It belongs to the tRNA(Ile)-lysidine synthase family.

The protein localises to the cytoplasm. The catalysed reaction is cytidine(34) in tRNA(Ile2) + L-lysine + ATP = lysidine(34) in tRNA(Ile2) + AMP + diphosphate + H(+). In terms of biological role, ligates lysine onto the cytidine present at position 34 of the AUA codon-specific tRNA(Ile) that contains the anticodon CAU, in an ATP-dependent manner. Cytidine is converted to lysidine, thus changing the amino acid specificity of the tRNA from methionine to isoleucine. In Haemophilus influenzae (strain 86-028NP), this protein is tRNA(Ile)-lysidine synthase.